We begin with the raw amino-acid sequence, 195 residues long: dCTP deaminase (195 aa).

Residues 110-115 (RSSLAR), Asp128, 136-138 (VLE), Tyr171, Lys178, and Gln182 contribute to the dCTP site. Glu138 functions as the Proton donor/acceptor in the catalytic mechanism.

Belongs to the dCTP deaminase family. Homotrimer.

The catalysed reaction is dCTP + H2O + H(+) = dUTP + NH4(+). It functions in the pathway pyrimidine metabolism; dUMP biosynthesis; dUMP from dCTP (dUTP route): step 1/2. Catalyzes the deamination of dCTP to dUTP. In Idiomarina loihiensis (strain ATCC BAA-735 / DSM 15497 / L2-TR), this protein is dCTP deaminase.